A 259-amino-acid chain; its full sequence is uncharacterized protein (259 aa).

The tract at residues 171-259 (LSKMPVPQSP…SYSTYEDDDF (89 aa)) is disordered. Polar residues predominate over residues 179–201 (SPSVPTMPSVNNDQPTQKPNKIT). Positions 202-211 (RNYKPKHQHN) are enriched in basic residues. Residues 212-236 (YKPNYQPNYQPNYGQNCSNSHSNDY) show a composition bias toward polar residues.

It is found in the virion. This is an uncharacterized protein from Acanthamoeba polyphaga (Amoeba).